We begin with the raw amino-acid sequence, 309 residues long: Aspartate carbamoyltransferase catalytic subunit (309 aa).

2 residues coordinate carbamoyl phosphate: arginine 58 and threonine 59. Lysine 87 contacts L-aspartate. Residues arginine 108, histidine 136, and glutamine 139 each coordinate carbamoyl phosphate. L-aspartate contacts are provided by arginine 168 and arginine 229. Carbamoyl phosphate contacts are provided by leucine 268 and proline 269.

The protein belongs to the aspartate/ornithine carbamoyltransferase superfamily. ATCase family. In terms of assembly, heterooligomer of catalytic and regulatory chains.

It catalyses the reaction carbamoyl phosphate + L-aspartate = N-carbamoyl-L-aspartate + phosphate + H(+). It functions in the pathway pyrimidine metabolism; UMP biosynthesis via de novo pathway; (S)-dihydroorotate from bicarbonate: step 2/3. In terms of biological role, catalyzes the condensation of carbamoyl phosphate and aspartate to form carbamoyl aspartate and inorganic phosphate, the committed step in the de novo pyrimidine nucleotide biosynthesis pathway. In Methanosarcina mazei (strain ATCC BAA-159 / DSM 3647 / Goe1 / Go1 / JCM 11833 / OCM 88) (Methanosarcina frisia), this protein is Aspartate carbamoyltransferase catalytic subunit.